Reading from the N-terminus, the 60-residue chain is Large ribosomal subunit protein bL32 (60 aa).

Positions methionine 1 to leucine 27 are disordered. A compositionally biased stretch (basic residues) spans lysine 13–lysine 25.

The protein belongs to the bacterial ribosomal protein bL32 family.

The sequence is that of Large ribosomal subunit protein bL32 from Protochlamydia amoebophila (strain UWE25).